The chain runs to 83 residues: Large ribosomal subunit protein bL27c (83 aa).

The interval 1 to 24 is disordered; it reads MAHKKGAGSTKNGRDSNAKRLGVK.

It belongs to the bacterial ribosomal protein bL27 family.

Its subcellular location is the plastid. The protein localises to the chloroplast. In Trieres chinensis (Marine centric diatom), this protein is Large ribosomal subunit protein bL27c (rpl27).